The primary structure comprises 31 residues: Cyclotide mra3 (31 aa).

3 disulfides stabilise this stretch: cysteine 5/cysteine 21, cysteine 9/cysteine 23, and cysteine 14/cysteine 28.

Post-translationally, this is a cyclic peptide. Contains 3 disulfide bonds.

Functionally, probably participates in a plant defense mechanism. The protein is Cyclotide mra3 of Melicytus ramiflorus (Whitey wood).